Consider the following 79-residue polypeptide: Small ribosomal subunit protein bS18 (79 aa).

Belongs to the bacterial ribosomal protein bS18 family. In terms of assembly, part of the 30S ribosomal subunit. Forms a tight heterodimer with protein bS6.

Functionally, binds as a heterodimer with protein bS6 to the central domain of the 16S rRNA, where it helps stabilize the platform of the 30S subunit. The polypeptide is Small ribosomal subunit protein bS18 (Rhodopseudomonas palustris (strain BisB18)).